Consider the following 464-residue polypeptide: ATP synthase subunit beta (464 aa).

153–160 contributes to the ATP binding site; it reads GGAGVGKT.

This sequence belongs to the ATPase alpha/beta chains family. F-type ATPases have 2 components, CF(1) - the catalytic core - and CF(0) - the membrane proton channel. CF(1) has five subunits: alpha(3), beta(3), gamma(1), delta(1), epsilon(1). CF(0) has three main subunits: a(1), b(2) and c(9-12). The alpha and beta chains form an alternating ring which encloses part of the gamma chain. CF(1) is attached to CF(0) by a central stalk formed by the gamma and epsilon chains, while a peripheral stalk is formed by the delta and b chains.

The protein localises to the cell inner membrane. The catalysed reaction is ATP + H2O + 4 H(+)(in) = ADP + phosphate + 5 H(+)(out). Its function is as follows. Produces ATP from ADP in the presence of a proton gradient across the membrane. The catalytic sites are hosted primarily by the beta subunits. The sequence is that of ATP synthase subunit beta from Burkholderia ambifaria (strain MC40-6).